Consider the following 61-residue polypeptide: MARKALMVKAQRPQKYTVRAYNRCKICGRSRAYMRKFGMCRICFREHALRGLIPGVTKSSW.

Zn(2+) is bound by residues C24, C27, C40, and C43.

It belongs to the universal ribosomal protein uS14 family. Zinc-binding uS14 subfamily. As to quaternary structure, part of the 30S ribosomal subunit. Contacts proteins S3 and S10. Zn(2+) is required as a cofactor.

Binds 16S rRNA, required for the assembly of 30S particles and may also be responsible for determining the conformation of the 16S rRNA at the A site. This Roseiflexus castenholzii (strain DSM 13941 / HLO8) protein is Small ribosomal subunit protein uS14.